Consider the following 273-residue polypeptide: Undecaprenyl-diphosphatase (273 aa).

Transmembrane regions (helical) follow at residues 54–74, 90–110, 116–136, 156–178, 190–210, 222–242, and 252–272; these read LGSI…LIGI, LTLI…LVFH, LFNP…LIAA, QAFM…SGAT, YAAS…ATVL, ADIP…LIAI, and ISFI…YVVF.

Belongs to the UppP family.

Its subcellular location is the cell inner membrane. The catalysed reaction is di-trans,octa-cis-undecaprenyl diphosphate + H2O = di-trans,octa-cis-undecaprenyl phosphate + phosphate + H(+). Catalyzes the dephosphorylation of undecaprenyl diphosphate (UPP). Confers resistance to bacitracin. The protein is Undecaprenyl-diphosphatase of Salmonella paratyphi A (strain ATCC 9150 / SARB42).